Consider the following 154-residue polypeptide: Protein X (154 aa).

The tract at residues 68–117 (PCALRFTSARSMETTVNAHQVLPKVLHKRTLGLSAMSTTDLEAYFKDCLF) is mitochondrial targeting sequence.

Belongs to the orthohepadnavirus protein X family. As to quaternary structure, may form homodimer. May interact with host CEBPA, CFLAR, CREB1, DDB1, E4F1, HBXIP, HSPD1/HSP60, NFKBIA, POLR2E and SMAD4. Interacts with host SMC5-SMC6 complex and induces its degradation. Interacts with host TRPC4AP; leading to prevent ubiquitination of TRPC4AP. Interacts with host PLSCR1; this interaction promotes ubiquitination and degradation of HBx and impairs HBx-mediated cell proliferation. In terms of processing, a fraction may be phosphorylated in insect cells and HepG2 cells, a human hepatoblastoma cell line. Phosphorylated in vitro by host protein kinase C or mitogen-activated protein kinase. N-acetylated in insect cells.

It localises to the host cytoplasm. Its subcellular location is the host nucleus. The protein localises to the host mitochondrion. Multifunctional protein that plays a role in silencing host antiviral defenses and promoting viral transcription. Does not seem to be essential for HBV infection. May be directly involved in development of cirrhosis and liver cancer (hepatocellular carcinoma). Most of cytosolic activities involve modulation of cytosolic calcium. The effect on apoptosis is controversial depending on the cell types in which the studies have been conducted. May induce apoptosis by localizing in mitochondria and causing loss of mitochondrial membrane potential. May also modulate apoptosis by binding host CFLAR, a key regulator of the death-inducing signaling complex (DISC). Promotes viral transcription by using the host E3 ubiquitin ligase DDB1 to target the SMC5-SMC6 complex to proteasomal degradation. This host complex would otherwise bind to viral episomal DNA, and prevents its transcription. Moderately stimulates transcription of many different viral and cellular transcription elements. Promoters and enhancers stimulated by HBx contain DNA binding sites for NF-kappa-B, AP-1, AP-2, c-EBP, ATF/CREB, or the calcium-activated factor NF-AT. The polypeptide is Protein X (Homo sapiens (Human)).